A 442-amino-acid polypeptide reads, in one-letter code: Capsid vertex component 1 (442 aa).

It belongs to the herpesviridae CVC1 protein family. In terms of assembly, interacts (via C-terminus) with capsid vertex component 2/CVC2.

It is found in the virion. The protein resides in the host nucleus. Its function is as follows. Capsid vertex-specific component that plays a role during viral DNA encapsidation, assuring correct genome cleavage and presumably stabilizing capsids that contain full-length viral genomes. This is Capsid vertex component 1 from Homo sapiens (Human).